We begin with the raw amino-acid sequence, 719 residues long: Fatty acid oxidation complex subunit alpha (719 aa).

Residues 1–190 are enoyl-CoA hydratase/isomerase; it reads MIYQGNRITV…KLGLVDAVVA (190 aa). Asp298 is a binding site for substrate. Residues 313 to 719 form a 3-hydroxyacyl-CoA dehydrogenase region; that stretch reads HDINEAAVLG…AAGETFYPKA (407 aa). NAD(+)-binding positions include Met326, Asp345, 402-404, Lys409, and Ser431; that span reads VVE. Catalysis depends on His452, which acts as the For 3-hydroxyacyl-CoA dehydrogenase activity. Residue Asn455 participates in NAD(+) binding. A substrate-binding site is contributed by Asn502.

The protein in the N-terminal section; belongs to the enoyl-CoA hydratase/isomerase family. This sequence in the C-terminal section; belongs to the 3-hydroxyacyl-CoA dehydrogenase family. In terms of assembly, heterotetramer of two alpha chains (FadB) and two beta chains (FadA).

The enzyme catalyses a (3S)-3-hydroxyacyl-CoA + NAD(+) = a 3-oxoacyl-CoA + NADH + H(+). It catalyses the reaction a (3S)-3-hydroxyacyl-CoA = a (2E)-enoyl-CoA + H2O. It carries out the reaction a 4-saturated-(3S)-3-hydroxyacyl-CoA = a (3E)-enoyl-CoA + H2O. The catalysed reaction is (3S)-3-hydroxybutanoyl-CoA = (3R)-3-hydroxybutanoyl-CoA. The enzyme catalyses a (3Z)-enoyl-CoA = a 4-saturated (2E)-enoyl-CoA. It catalyses the reaction a (3E)-enoyl-CoA = a 4-saturated (2E)-enoyl-CoA. It participates in lipid metabolism; fatty acid beta-oxidation. Its function is as follows. Involved in the aerobic and anaerobic degradation of long-chain fatty acids via beta-oxidation cycle. Catalyzes the formation of 3-oxoacyl-CoA from enoyl-CoA via L-3-hydroxyacyl-CoA. It can also use D-3-hydroxyacyl-CoA and cis-3-enoyl-CoA as substrate. The protein is Fatty acid oxidation complex subunit alpha of Psychrobacter sp. (strain PRwf-1).